A 134-amino-acid polypeptide reads, in one-letter code: Profilin-2 (134 aa).

A disulfide bond links Cys-13 and Cys-118. Residues 84 to 100 (AVIRGKKGSGGITIKKT) carry the Involved in PIP2 interaction motif. At Thr-114 the chain carries Phosphothreonine.

Belongs to the profilin family. As to quaternary structure, occurs in many kinds of cells as a complex with monomeric actin in a 1:1 ratio. Post-translationally, phosphorylated by MAP kinases.

It localises to the cytoplasm. The protein resides in the cytoskeleton. Its function is as follows. Binds to actin and affects the structure of the cytoskeleton. At high concentrations, profilin prevents the polymerization of actin, whereas it enhances it at low concentrations. This is Profilin-2 from Olea europaea (Common olive).